A 356-amino-acid chain; its full sequence is CX3C chemokine receptor 1 (356 aa).

The Extracellular segment spans residues methionine 1–aspartate 26. Residues isoleucine 27–leucine 47 traverse the membrane as a helical segment. Over valine 48–aspartate 68 the chain is Cytoplasmic. The chain crosses the membrane as a helical span at residues isoleucine 69–threonine 89. Over histidine 90–leucine 105 the chain is Extracellular. Cysteines 103 and 176 form a disulfide. The chain crosses the membrane as a helical span at residues threonine 106–isoleucine 126. Residues aspartate 127–glycine 147 lie on the Cytoplasmic side of the membrane. Residues valine 148 to phenylalanine 168 traverse the membrane as a helical segment. The Extracellular segment spans residues threonine 169 to glutamate 195. The helical transmembrane segment at alanine 196–isoleucine 216 threads the bilayer. At glutamine 217–lysine 232 the chain is on the cytoplasmic side. The chain crosses the membrane as a helical span at residues leucine 233–phenylalanine 253. At leucine 254 to serine 277 the chain is on the extracellular side. The chain crosses the membrane as a helical span at residues valine 278–glycine 298. Residues glutamine 299–leucine 356 lie on the Cytoplasmic side of the membrane. Threonine 347 is subject to Phosphothreonine.

It belongs to the G-protein coupled receptor 1 family. In terms of assembly, found in a ternary complex with CX3CL1 and ITGAV:ITGB3 or ITGA4:ITGB1. In terms of processing, this protein is not N-glycosylated which is unusual for G-protein-coupled receptors.

The protein localises to the cell membrane. In terms of biological role, receptor for the C-X3-C chemokine fractalkine (CX3CL1) present on many early leukocyte cells; CX3CR1-CX3CL1 signaling exerts distinct functions in different tissue compartments, such as immune response, inflammation, cell adhesion and chemotaxis. CX3CR1-CX3CL1 signaling mediates cell migratory functions. Responsible for the recruitment of natural killer (NK) cells to inflamed tissues. Acts as a regulator of inflammation process leading to atherogenesis by mediating macrophage and monocyte recruitment to inflamed atherosclerotic plaques, promoting cell survival. Involved in airway inflammation by promoting interleukin 2-producing T helper (Th2) cell survival in inflamed lung. Involved in the migration of circulating monocytes to non-inflamed tissues, where they differentiate into macrophages and dendritic cells. Acts as a negative regulator of angiogenesis, probably by promoting macrophage chemotaxis. Plays a key role in brain microglia by regulating inflammatory response in the central nervous system (CNS) and regulating synapse maturation. Required to restrain the microglial inflammatory response in the CNS and the resulting parenchymal damage in response to pathological stimuli. Involved in brain development by participating in synaptic pruning, a natural process during which brain microglia eliminates extra synapses during postnatal development. Synaptic pruning by microglia is required to promote the maturation of circuit connectivity during brain development. Acts as an important regulator of the gut microbiota by controlling immunity to intestinal bacteria and fungi. Expressed in lamina propria dendritic cells in the small intestine, which form transepithelial dendrites capable of taking up bacteria in order to provide defense against pathogenic bacteria. Required to initiate innate and adaptive immune responses against dissemination of commensal fungi (mycobiota) component of the gut: expressed in mononuclear phagocytes (MNPs) and acts by promoting induction of antifungal IgG antibodies response to confer protection against disseminated C.albicans or C.auris infection. Also acts as a receptor for C-C motif chemokine CCL26, inducing cell chemotaxis. This Oryctolagus cuniculus (Rabbit) protein is CX3C chemokine receptor 1.